The sequence spans 269 residues: 4-hydroxy-tetrahydrodipicolinate reductase (269 aa).

Residues 8 to 13 (GAAGRM) and Glu34 each bind NAD(+). Residue Arg35 coordinates NADP(+). NAD(+) contacts are provided by residues 98–100 (GTT) and 122–125 (APNY). The active-site Proton donor/acceptor is the His155. His156 is a binding site for (S)-2,3,4,5-tetrahydrodipicolinate. The Proton donor role is filled by Lys159. A (S)-2,3,4,5-tetrahydrodipicolinate-binding site is contributed by 165-166 (GT).

This sequence belongs to the DapB family.

The protein localises to the cytoplasm. The enzyme catalyses (S)-2,3,4,5-tetrahydrodipicolinate + NAD(+) + H2O = (2S,4S)-4-hydroxy-2,3,4,5-tetrahydrodipicolinate + NADH + H(+). It catalyses the reaction (S)-2,3,4,5-tetrahydrodipicolinate + NADP(+) + H2O = (2S,4S)-4-hydroxy-2,3,4,5-tetrahydrodipicolinate + NADPH + H(+). The protein operates within amino-acid biosynthesis; L-lysine biosynthesis via DAP pathway; (S)-tetrahydrodipicolinate from L-aspartate: step 4/4. Its function is as follows. Catalyzes the conversion of 4-hydroxy-tetrahydrodipicolinate (HTPA) to tetrahydrodipicolinate. The polypeptide is 4-hydroxy-tetrahydrodipicolinate reductase (Vibrio campbellii (strain ATCC BAA-1116)).